The primary structure comprises 502 residues: Medium/long-chain-fatty-acid--CoA ligase FadD17 (502 aa).

This sequence belongs to the ATP-dependent AMP-binding enzyme family.

It catalyses the reaction a medium-chain fatty acid + ATP + CoA = a medium-chain fatty acyl-CoA + AMP + diphosphate. The enzyme catalyses a long-chain fatty acid + ATP + CoA = a long-chain fatty acyl-CoA + AMP + diphosphate. The protein operates within lipid metabolism; fatty acid biosynthesis. Catalyzes the activation of medium/long-chain fatty acids as acyl-coenzyme A (acyl-CoA), which are then transferred to the multifunctional polyketide synthase (PKS) type III for further chain extension. The sequence is that of Medium/long-chain-fatty-acid--CoA ligase FadD17 (fadD17) from Mycobacterium bovis (strain ATCC BAA-935 / AF2122/97).